Consider the following 312-residue polypeptide: Glyoxylate/hydroxypyruvate reductase A (312 aa).

Residue arginine 227 is part of the active site. Histidine 275 functions as the Proton donor in the catalytic mechanism.

It belongs to the D-isomer specific 2-hydroxyacid dehydrogenase family. GhrA subfamily.

It localises to the cytoplasm. It carries out the reaction glycolate + NADP(+) = glyoxylate + NADPH + H(+). The catalysed reaction is (R)-glycerate + NAD(+) = 3-hydroxypyruvate + NADH + H(+). It catalyses the reaction (R)-glycerate + NADP(+) = 3-hydroxypyruvate + NADPH + H(+). Catalyzes the NADPH-dependent reduction of glyoxylate and hydroxypyruvate into glycolate and glycerate, respectively. This is Glyoxylate/hydroxypyruvate reductase A from Escherichia coli (strain UTI89 / UPEC).